The sequence spans 349 residues: Magnesium-protoporphyrin IX monomethyl ester [oxidative] cyclase (349 aa).

The protein belongs to the AcsF family. It depends on Fe cation as a cofactor.

It is found in the plastid. It localises to the chloroplast. It catalyses the reaction Mg-protoporphyrin IX 13-monomethyl ester + 3 NADPH + 3 O2 + 2 H(+) = 3,8-divinyl protochlorophyllide a + 3 NADP(+) + 5 H2O. It functions in the pathway porphyrin-containing compound metabolism; chlorophyll biosynthesis (light-independent). In terms of biological role, catalyzes the formation of the isocyclic ring in chlorophyll biosynthesis. Mediates the cyclase reaction, which results in the formation of divinylprotochlorophyllide (Pchlide) characteristic of all chlorophylls from magnesium-protoporphyrin IX 13-monomethyl ester (MgPMME). In Porphyra purpurea (Red seaweed), this protein is Magnesium-protoporphyrin IX monomethyl ester [oxidative] cyclase.